We begin with the raw amino-acid sequence, 490 residues long: GTPase Der (490 aa).

2 EngA-type G domains span residues 3–166 (PVVA…MEDL) and 203–376 (IKLA…DSST). Residues 9–16 (GRPNVGKS), 56–60 (DTGGI), 118–121 (NKTD), 209–216 (GRPNVGKS), 256–260 (DTAGV), and 321–324 (NKWD) each bind GTP. The KH-like domain maps to 377–461 (RRVGTSMLTR…PIRIQFKEGE (85 aa)).

This sequence belongs to the TRAFAC class TrmE-Era-EngA-EngB-Septin-like GTPase superfamily. EngA (Der) GTPase family. Associates with the 50S ribosomal subunit.

GTPase that plays an essential role in the late steps of ribosome biogenesis. The polypeptide is GTPase Der (Escherichia coli O17:K52:H18 (strain UMN026 / ExPEC)).